A 616-amino-acid chain; its full sequence is Dihydroxy-acid dehydratase (616 aa).

D81 is a binding site for Mg(2+). [2Fe-2S] cluster is bound at residue C122. Mg(2+)-binding residues include D123 and K124. K124 carries the N6-carboxylysine modification. Residue C195 participates in [2Fe-2S] cluster binding. E491 serves as a coordination point for Mg(2+). Residue S517 is the Proton acceptor of the active site.

The protein belongs to the IlvD/Edd family. In terms of assembly, homodimer. [2Fe-2S] cluster serves as cofactor. The cofactor is Mg(2+).

The catalysed reaction is (2R)-2,3-dihydroxy-3-methylbutanoate = 3-methyl-2-oxobutanoate + H2O. It catalyses the reaction (2R,3R)-2,3-dihydroxy-3-methylpentanoate = (S)-3-methyl-2-oxopentanoate + H2O. The protein operates within amino-acid biosynthesis; L-isoleucine biosynthesis; L-isoleucine from 2-oxobutanoate: step 3/4. Its pathway is amino-acid biosynthesis; L-valine biosynthesis; L-valine from pyruvate: step 3/4. Its function is as follows. Functions in the biosynthesis of branched-chain amino acids. Catalyzes the dehydration of (2R,3R)-2,3-dihydroxy-3-methylpentanoate (2,3-dihydroxy-3-methylvalerate) into 2-oxo-3-methylpentanoate (2-oxo-3-methylvalerate) and of (2R)-2,3-dihydroxy-3-methylbutanoate (2,3-dihydroxyisovalerate) into 2-oxo-3-methylbutanoate (2-oxoisovalerate), the penultimate precursor to L-isoleucine and L-valine, respectively. The chain is Dihydroxy-acid dehydratase from Salmonella paratyphi C (strain RKS4594).